The following is a 137-amino-acid chain: Large ribosomal subunit protein uL16 (137 aa).

The protein belongs to the universal ribosomal protein uL16 family. Part of the 50S ribosomal subunit.

Its function is as follows. Binds 23S rRNA and is also seen to make contacts with the A and possibly P site tRNAs. The polypeptide is Large ribosomal subunit protein uL16 (Bartonella bacilliformis (strain ATCC 35685 / KC583 / Herrer 020/F12,63)).